We begin with the raw amino-acid sequence, 220 residues long: Histone deacetylase complex subunit SAP30 (220 aa).

The segment at 1–129 is interaction with NCOR1; that stretch reads MNGFTPDEMS…QSVRNRRKRK (129 aa). Phosphothreonine is present on threonine 5. Residues 67–115 form an Atypical zinc finger; that stretch reads CCLREDGERCGRAAGNASFSKRIQKSISQKKVKIELDKSARHLYICDYH. Lysine 87 is covalently cross-linked (Glycyl lysine isopeptide (Lys-Gly) (interchain with G-Cter in SUMO2)). A disordered region spans residues 123–143; it reads RNRRKRKGSDDDGGDSPVQDI. The segment at 130-220 is interaction with SIN3A; that stretch reads GSDDDGGDSP…SDLKVDSGVH (91 aa). Serine 131 and serine 138 each carry phosphoserine. The residue at position 145 (threonine 145) is a Phosphothreonine. Glycyl lysine isopeptide (Lys-Gly) (interchain with G-Cter in SUMO2) cross-links involve residues lysine 194, lysine 205, and lysine 214.

The protein belongs to the SAP30 family. In terms of assembly, component of the histone deacetylase complex that includes at least SIN3A, HDAC1 and HDAC2. Found in a complex composed of at least SINHCAF, SIN3A, HDAC1, SAP30, RBBP4, OGT and TET1. Interacts with HDAC1. Interacts with SIN3A, SIN3B, HDAC2, RBBP4 and NCOR1. Interacts with SAMSN1. Interacts with HCFC1. Interacts with SAP30BP. As to expression, expressed in all tissues tested with highest levels in pancreas, ovary, PBL, spleen and thymus; lowest levels in brain, placenta, lung and kidney.

Its subcellular location is the nucleus. Involved in the functional recruitment of the Sin3-histone deacetylase complex (HDAC) to a specific subset of N-CoR corepressor complexes. Capable of transcription repression by N-CoR. Active in deacetylating core histone octamers (when in a complex) but inactive in deacetylating nucleosomal histones. Its function is as follows. (Microbial infection) Involved in transcriptional repression of HHV-1 genes TK and gC. The chain is Histone deacetylase complex subunit SAP30 from Homo sapiens (Human).